Reading from the N-terminus, the 466-residue chain is Argininosuccinate lyase (466 aa).

Belongs to the lyase 1 family. Argininosuccinate lyase subfamily.

It is found in the cytoplasm. It carries out the reaction 2-(N(omega)-L-arginino)succinate = fumarate + L-arginine. Its pathway is amino-acid biosynthesis; L-arginine biosynthesis; L-arginine from L-ornithine and carbamoyl phosphate: step 3/3. This chain is Argininosuccinate lyase, found in Brucella canis (strain ATCC 23365 / NCTC 10854 / RM-666).